A 156-amino-acid polypeptide reads, in one-letter code: uncharacterized protein (156 aa).

The first 27 residues, 1 to 27, serve as a signal peptide directing secretion; the sequence is MKLLVLRLILIISTIFVLLNLSCMVNG. Residues N20, N83, N103, N106, and N134 are each glycosylated (N-linked (GlcNAc...) asparagine).

The protein resides in the secreted. This is an uncharacterized protein from Dictyostelium discoideum (Social amoeba).